Consider the following 196-residue polypeptide: Homeobox protein XENK-2 (196 aa).

The tract at residues 48–72 is disordered; it reads PSADESPDNDKELSSNPDSGKKRKR. The homeobox DNA-binding region spans 69–128; sequence KRKRRVLFSKAQTYELERRFRQQRYLSAPEREHLASLIRLTPTQVKIWFQNHRYKMKRAR.

It belongs to the NK-2 homeobox family. In terms of tissue distribution, forebrain and midbrain.

Its subcellular location is the nucleus. In terms of biological role, defines dorsal-ventral domains in developing brain. May play a role in defining positional information along the anterior-posterior (a/p) axis and the dorsal-ventral (d/v) axis of the developing nervous system. May be involved in determining positional or boundary information rather than determining a given cell type. The protein is Homeobox protein XENK-2 of Xenopus laevis (African clawed frog).